Reading from the N-terminus, the 168-residue chain is Cyanate hydratase (168 aa).

Catalysis depends on residues arginine 94, glutamate 97, and serine 120.

The protein belongs to the cyanase family.

The enzyme catalyses cyanate + hydrogencarbonate + 3 H(+) = NH4(+) + 2 CO2. In terms of biological role, catalyzes the reaction of cyanate with bicarbonate to produce ammonia and carbon dioxide. In Oryza sativa subsp. indica (Rice), this protein is Cyanate hydratase.